Here is a 317-residue protein sequence, read N- to C-terminus: tRNA dimethylallyltransferase (317 aa).

14 to 21 (GPTAVGKT) serves as a coordination point for ATP. Residue 16-21 (TAVGKT) coordinates substrate. An interaction with substrate tRNA region spans residues 39 to 42 (DSMQ).

Belongs to the IPP transferase family. As to quaternary structure, monomer. Mg(2+) is required as a cofactor.

The enzyme catalyses adenosine(37) in tRNA + dimethylallyl diphosphate = N(6)-dimethylallyladenosine(37) in tRNA + diphosphate. Catalyzes the transfer of a dimethylallyl group onto the adenine at position 37 in tRNAs that read codons beginning with uridine, leading to the formation of N6-(dimethylallyl)adenosine (i(6)A). The protein is tRNA dimethylallyltransferase of Bacillus cereus (strain B4264).